Here is a 35-residue protein sequence, read N- to C-terminus: Cupiennin-2d (35 aa).

A Glutamine amide modification is found at Q35.

In terms of tissue distribution, expressed by the venom gland.

It is found in the secreted. The sequence is that of Cupiennin-2d from Cupiennius salei (American wandering spider).